Consider the following 227-residue polypeptide: YEATS domain-containing protein 4 (227 aa).

Residues 15–158 (RVKGVTIVKP…AMMQQLLTTS (144 aa)) enclose the YEATS domain. A Glycyl lysine isopeptide (Lys-Gly) (interchain with G-Cter in SUMO2) cross-link involves residue Lys37. The diacetylated histone H3 binding stretch occupies residues 93–97 (WGEFE). An interaction with MLLT10 region spans residues 163–227 (LGAYKHETEF…LEEDDQTKDI (65 aa)). An interaction with TACC1 region spans residues 168 to 227 (HETEFAELEVKTREKLEAAKKKTSFEIAELKERLKASRETINCLKNEIRKLEEDDQTKDI). Residues 178-226 (KTREKLEAAKKKTSFEIAELKERLKASRETINCLKNEIRKLEEDDQTKD) adopt a coiled-coil conformation.

As to quaternary structure, component of numerous complexes with chromatin remodeling and histone acetyltransferase activity. Component of the NuA4 histone acetyltransferase complex which contains the catalytic subunit KAT5/TIP60 and the subunits EP400, TRRAP/PAF400, BRD8/SMAP, EPC1, DMAP1/DNMAP1, RUVBL1/TIP49, RUVBL2, ING3, actin, ACTL6A/BAF53A, MORF4L1/MRG15, MORF4L2/MRGX, MRGBP, YEATS4/GAS41, VPS72/YL1 and MEAF6. The NuA4 complex interacts with MYC and the adenovirus E1A protein. Component of a NuA4-related complex which contains EP400, TRRAP/PAF400, SRCAP, BRD8/SMAP, EPC1, DMAP1/DNMAP1, RUVBL1/TIP49, RUVBL2, actin, ACTL6A/BAF53A, VPS72 and YEATS4/GAS41. Interacts with MLLT10/AF10. Also interacts with the SWI/SNF component SMARCB1/BAF47, TACC1 and TACC2, and the nuclear matrix protein NUMA1.

It is found in the nucleus. Chromatin reader component of the NuA4 histone acetyltransferase (HAT) complex, a complex involved in transcriptional activation of select genes principally by acetylation of nucleosomal histones H4 and H2A. Specifically recognizes and binds acylated histone H3, with a preference for histone H3 diacetylated at 'Lys-18' and 'Lys-27' (H3K18ac and H3K27ac) or histone H3 diacetylated at 'Lys-14' and 'Lys-27' (H3K14ac and H3K27ac). Also able to recognize and bind crotonylated histone H3. May also recognize and bind histone H3 succinylated at 'Lys-122' (H3K122succ); additional evidences are however required to confirm this result in vivo. Plays a key role in histone variant H2AZ1/H2A.Z deposition into specific chromatin regions: recognizes and binds H3K14ac and H3K27ac on the promoters of actively transcribed genes and recruits NuA4-related complex to deposit H2AZ1/H2A.Z. H2AZ1/H2A.Z deposition is required for maintenance of embryonic stem cell. The protein is YEATS domain-containing protein 4 of Mus musculus (Mouse).